A 131-amino-acid chain; its full sequence is Global transcriptional regulator Spx (131 aa).

Cysteines 10 and 13 form a disulfide.

This sequence belongs to the ArsC family. Spx subfamily. In terms of assembly, interacts with the C-terminal domain of the alpha subunit of the RNAP.

It localises to the cytoplasm. In terms of biological role, global transcriptional regulator that plays a key role in stress response and exerts either positive or negative regulation of genes. Acts by interacting with the C-terminal domain of the alpha subunit of the RNA polymerase (RNAP). This interaction can enhance binding of RNAP to the promoter region of target genes and stimulate their transcription, or block interaction of RNAP with activator. The protein is Global transcriptional regulator Spx of Staphylococcus haemolyticus (strain JCSC1435).